Reading from the N-terminus, the 143-residue chain is Regulator of ribonuclease activity B (143 aa).

The tract at residues 113–143 is disordered; the sequence is EDPNAEEDEYGDDGEFFDDEDEADFNNAKVH. A compositionally biased stretch (acidic residues) spans 115–136; sequence PNAEEDEYGDDGEFFDDEDEAD.

Belongs to the RraB family. In terms of assembly, interacts with the C-terminal region of Rne.

It is found in the cytoplasm. In terms of biological role, globally modulates RNA abundance by binding to RNase E (Rne) and regulating its endonucleolytic activity. Can modulate Rne action in a substrate-dependent manner by altering the composition of the degradosome. The polypeptide is Regulator of ribonuclease activity B (Haemophilus ducreyi (strain 35000HP / ATCC 700724)).